We begin with the raw amino-acid sequence, 489 residues long: Capsid protein (489 aa).

The disordered stretch occupies residues G79 to Q144. The segment covering T81–F94 has biased composition (acidic residues). Over residues E95–E110 the composition is skewed to basic and acidic residues. The short motif at R122–K125 is the Nuclear localization signal element. Over residues Q135–Q144 the composition is skewed to polar residues. The CCHC-type zinc finger occupies C412 to N429. Residues E467 to D489 form a disordered region.

The protein belongs to the caulimoviridae capsid protein family. In terms of assembly, interacts (via nuclear localization signal) with host importin alpha.

It is found in the virion. The protein resides in the host nucleus. Self assembles to form an icosahedral capsid, about 50 nm in diameter, nm, composed of 420 subunits of the viral capsid protein. The capsid encapsulates the genomic dsDNA. Following virus entry into host cell, provides nuclear import of the viral genome. Virus particles do not enter the nucleus, but dock at the nuclear membrane through the interaction with host importins. This chain is Capsid protein, found in Arabidopsis thaliana (Mouse-ear cress).